A 272-amino-acid polypeptide reads, in one-letter code: Putative bark agglutinin LECRPA3 (272 aa).

The N-terminal stretch at 1-29 (PFNPETVYALLAMLISFFVLLASARKENS) is a signal peptide. N-linked (GlcNAc...) asparagine glycans are attached at residues Asn-36, Asn-39, and Asn-65. Residues Glu-150 and Asp-152 each coordinate Mn(2+). Residues Asp-152, Tyr-154, Asn-156, and Asp-159 each contribute to the Ca(2+) site. The Mn(2+) site is built by Asp-159 and His-164.

The protein belongs to the leguminous lectin family. Homotetramer. In terms of tissue distribution, weak expression in bark. The lectin accumulates in the inner bark in autumn.

Its function is as follows. Bark lectins are storage proteins that probably maintain stocks of nitrogen during dormant period. Self-aggregatable molecules that can bind their own carbohydrate side chains. They could also play a role in the plant's defense against phytophagous invertebrates or herbivorous higher animals. This Robinia pseudoacacia (Black locust) protein is Putative bark agglutinin LECRPA3.